Consider the following 348-residue polypeptide: Alcohol dehydrogenase 1 (348 aa).

Zn(2+) is bound by residues C44, H67, C98, C101, C104, C112, and C154. Residues 178–184, D202, K207, 269–271, and R341 each bind NAD(+); these read GAGGGLG and VGL.

The protein belongs to the zinc-containing alcohol dehydrogenase family. Homotetramer. Zn(2+) serves as cofactor.

It is found in the cytoplasm. The catalysed reaction is a primary alcohol + NAD(+) = an aldehyde + NADH + H(+). It catalyses the reaction a secondary alcohol + NAD(+) = a ketone + NADH + H(+). In terms of biological role, converts ethanol to acetaldehyde and plays a major role in xylose fermentation. The chain is Alcohol dehydrogenase 1 (ADH1) from Scheffersomyces stipitis (strain ATCC 58785 / CBS 6054 / NBRC 10063 / NRRL Y-11545) (Yeast).